We begin with the raw amino-acid sequence, 115 residues long: MQAQAPVVVVTQPGVGPGPAPQNSNWQTGMCDCFSDCGVCLCGTFCFPCLGCQVAADMNECCLCGTSVAMRTLYRTRYGIPGSICDDYMATLCCPHCTLCQIKRDINRRRAMRTF.

It belongs to the cornifelin family. Expressed at high levels in plasmacytoid dendritic cells. High expression in spleen, lymph nodes, peripheral blood leukocytes, and bone marrow, with lower expression in thymus, appendix, and fetal liver.

This chain is Placenta-specific gene 8 protein (PLAC8), found in Homo sapiens (Human).